Reading from the N-terminus, the 250-residue chain is Triosephosphate isomerase, cytosolic (250 aa).

Substrate contacts are provided by Asn1 and Lys3. The active-site Electrophile is the His87. The active-site Proton acceptor is Glu160.

It belongs to the triosephosphate isomerase family. Homodimer.

The protein resides in the cytoplasm. It catalyses the reaction D-glyceraldehyde 3-phosphate = dihydroxyacetone phosphate. Its pathway is carbohydrate biosynthesis; gluconeogenesis. It functions in the pathway carbohydrate degradation; glycolysis; D-glyceraldehyde 3-phosphate from glycerone phosphate: step 1/1. In Gracilaria gracilis (Red alga), this protein is Triosephosphate isomerase, cytosolic (TPI1).